An 860-amino-acid chain; its full sequence is Leucine--tRNA ligase (860 aa).

The short motif at 42-52 is the 'HIGH' region element; it reads PYPSGRLHMGH. Residues 619–623 carry the 'KMSKS' region motif; the sequence is KMSKS. Residue Lys-622 participates in ATP binding.

Belongs to the class-I aminoacyl-tRNA synthetase family.

Its subcellular location is the cytoplasm. It carries out the reaction tRNA(Leu) + L-leucine + ATP = L-leucyl-tRNA(Leu) + AMP + diphosphate. In Cronobacter sakazakii (strain ATCC BAA-894) (Enterobacter sakazakii), this protein is Leucine--tRNA ligase.